Here is a 239-residue protein sequence, read N- to C-terminus: Peptidyl-tRNA hydrolase (239 aa).

Tyr-14 lines the tRNA pocket. Residue His-19 is the Proton acceptor of the active site. Residues Phe-64, Asn-66, and Asn-112 each contribute to the tRNA site.

This sequence belongs to the PTH family. As to quaternary structure, monomer.

The protein localises to the cytoplasm. The enzyme catalyses an N-acyl-L-alpha-aminoacyl-tRNA + H2O = an N-acyl-L-amino acid + a tRNA + H(+). In terms of biological role, hydrolyzes ribosome-free peptidyl-tRNAs (with 1 or more amino acids incorporated), which drop off the ribosome during protein synthesis, or as a result of ribosome stalling. Functionally, catalyzes the release of premature peptidyl moieties from peptidyl-tRNA molecules trapped in stalled 50S ribosomal subunits, and thus maintains levels of free tRNAs and 50S ribosomes. This chain is Peptidyl-tRNA hydrolase, found in Rhizobium meliloti (strain 1021) (Ensifer meliloti).